The chain runs to 430 residues: Dihydroorotase (430 aa).

Zn(2+)-binding residues include His-57 and His-59. Substrate is bound by residues 59–61 (HLR) and Asn-91. Zn(2+) contacts are provided by Asp-151, His-178, and His-231. Residue Asn-277 participates in substrate binding. Position 304 (Asp-304) interacts with Zn(2+). Asp-304 is a catalytic residue. Residues His-308 and 322–323 (PG) contribute to the substrate site.

This sequence belongs to the metallo-dependent hydrolases superfamily. DHOase family. Class I DHOase subfamily. Zn(2+) is required as a cofactor.

The enzyme catalyses (S)-dihydroorotate + H2O = N-carbamoyl-L-aspartate + H(+). It functions in the pathway pyrimidine metabolism; UMP biosynthesis via de novo pathway; (S)-dihydroorotate from bicarbonate: step 3/3. Catalyzes the reversible cyclization of carbamoyl aspartate to dihydroorotate. The protein is Dihydroorotase of Mycobacterium bovis (strain ATCC BAA-935 / AF2122/97).